Here is a 707-residue protein sequence, read N- to C-terminus: MTKRLTPQEKLSRKPASRACTFCHQKHLQCSNERPCKNCVKRNIADQCQDITRKRVKYLTGANSKAVAAATTPEATTTTPKRKQKRSVKGSPSISFPSSSISPINTSTFDTNGHPNGHPNDLLRQSLEASQAGQAQAPSLLEIQGPFPQMQTLQPTHTVASETSSSYSQVQPQHHPESSVPPSAPPESVDQLQQLMMHDSAYFNTNNVALNPTNVLEADPFDGHTNTMLNTTTDVLNKLLNDHYEIDNILQPPDDALLVDQQQSSSEATGTSASKAVPMGPSHSNTHFSSNYLNEEYLMLGDILLQSKPTSPSPSNTSASEYNMLSPSYTQNIDFDNIHLSKRKVVQKLKDSRPFISLGFPKDSSLSLDNLNNMAHQTDNLLDNNVSSRGNNNTSNQKLQSAIASKTSKTNPIINFATKYSTEYVSPLSTHQIYQTVSDIYSKDVLNYEYPNSYHALTHFLKTRFSGNNLPHEEKARKRQNLLVILKLIASYRPTFISAHKSLLKPQDLLFLEMSFQRCLIDYEKLSQLNSSPTIIWRRTGEIVSITDDLLSLLGYKLLDILSKRTFIMEIMYDDESIVKYFQLFKSVAVGNLHSSINTKVKLIKNGGAVPGGGTSNGKYNYNNNYNHNYSHNNNNNNNSNNSNNNGMSTGAGNSGDGDGLENNVGTNSYIEFCSVWTVKRDLFDIPMLIIGQFLPILPAGDGVRMY.

The zn(2)-C6 fungal-type DNA-binding region spans 20–48 (CTFCHQKHLQCSNERPCKNCVKRNIADQC). Disordered regions lie at residues 63–122 (NSKA…PNDL), 154–188 (QPTH…PPES), 260–283 (DQQQ…GPSH), and 385–404 (NVSS…SAIA). 2 stretches are compositionally biased toward low complexity: residues 66–79 (AVAA…TTTT) and 91–104 (SPSI…ISPI). 2 stretches are compositionally biased toward polar residues: residues 105–114 (NTSTFDTNGH) and 154–172 (QPTH…QVQP). Residues 178–188 (SSVPPSAPPES) are compositionally biased toward low complexity. Positions 260-274 (DQQQSSSEATGTSAS) are enriched in polar residues. In terms of domain architecture, PAS spans 522–591 (DYEKLSQLNS…FQLFKSVAVG (70 aa)). A compositionally biased stretch (low complexity) spans 621–652 (NYNNNYNHNYSHNNNNNNNSNNSNNNGMSTGA). The disordered stretch occupies residues 621-659 (NYNNNYNHNYSHNNNNNNNSNNSNNNGMSTGAGNSGDGD).

This sequence belongs to the ERT1/acuK family.

It is found in the nucleus. Transcription factor which regulates nonfermentable carbon utilization. The protein is Glucose starvation modulator protein 1 (GSM1) of Lodderomyces elongisporus (strain ATCC 11503 / CBS 2605 / JCM 1781 / NBRC 1676 / NRRL YB-4239) (Yeast).